The following is a 427-amino-acid chain: Tumor necrosis factor receptor superfamily member 16 (427 aa).

The signal sequence occupies residues 1–28; sequence MGAGATGRAMDGPRLLLLLLLGVSLGGA. Over 29–250 the chain is Extracellular; it reads KEACPTGLYT…PVVTRGTTDN (222 aa). 4 TNFR-Cys repeats span residues 31–64, 66–107, 108–146, and 148–188; these read ACPTGLYTHSGECCKACNLGEGVAQPCGANQTVC, PCLD…DAVC, RCAYGYYQDETTGRCEACRVCEAGSGLVFSCQDKQNTVC, and ECPD…DAEC. Disulfide bonds link C32/C43, C44/C57, C47/C64, C67/C83, C86/C99, C89/C107, C109/C122, C125/C138, C128/C146, C149/C164, C167/C180, and C170/C188. N60 is a glycosylation site (N-linked (GlcNAc...) asparagine). The interval 194–219 is disordered; sequence RWITRSTPPEGSDSTAPSTQEPEAPP. Positions 197 to 214 are enriched in polar residues; sequence TRSTPPEGSDSTAPSTQE. The chain crosses the membrane as a helical span at residues 251–272; it reads LIPVYCSILAAVVVGLVAYIAF. Residues 273–427 lie on the Cytoplasmic side of the membrane; that stretch reads KRWNSCKQNK…CSESTATSPV (155 aa). Composition is skewed to polar residues over residues 281–291 and 305–326; these read NKQGANSRPVN and SGISVDSQSLHDQQPHTQTASG. The interval 281 to 338 is disordered; the sequence is NKQGANSRPVNQTPPPEGEKLHSDSGISVDSQSLHDQQPHTQTASGQALKGDGGLYSS. At S311 the chain carries Phosphoserine. A mediates interaction with KIDINS220 region spans residues 326 to 341; the sequence is GQALKGDGGLYSSLPP. A Death domain is found at 344 to 421; sequence REEVEKLLNG…DLVESLCSES (78 aa).

In terms of assembly, homodimer; disulfide-linked. Heterodimer with SORCS2. The extracellular domains of the heterodimer bind NGF. The cytoplasmic region of the heterodimer binds TRIO. NGF binding mediates dissociation of TRIO from the receptor complex. Interacts with RTN4R. Interacts with TRAF2, TRAF4, TRAF6, PTPN13 and RANBP9. Interacts through TRAF6 with SQSTM1 which bridges NGFR to NTRK1. Interacts with BEX1. Interacts with BEX3. Interacts with KIDINS220 and NTRK1. Can form a ternary complex with NTRK1 and KIDINS220 and this complex is affected by the expression levels of KIDINS220. An increase in KIDINS220 expression leads to a decreased association of NGFR and NTRK1. Interacts with NTRK2; may regulate the ligand specificity of the NTRK2 receptor. Interacts (via death domain) with RAB31. Interacts with LINGO1. Interacts with NRADD. Interacts with MAGED1; the interaction antagonizes the association NGFR:NTRK1. Interacts (via death domain) with ARHGDIA and RIPK2. Interacts with BFAR. N- and O-glycosylated. In terms of processing, O-linked glycans consist of Gal(1-3)GalNAc core elongated by 1 or 2 NeuNAc. Post-translationally, phosphorylated on serine residues.

It is found in the cell membrane. The protein resides in the cytoplasm. The protein localises to the perikaryon. It localises to the cell projection. Its subcellular location is the growth cone. It is found in the dendritic spine. Its function is as follows. Low affinity receptor which can bind to NGF, BDNF, NTF3, and NTF4. Forms a heterodimeric receptor with SORCS2 that binds the precursor forms of NGF, BDNF and NTF3 with high affinity, and has much lower affinity for mature NGF and BDNF. Plays an important role in differentiation and survival of specific neuronal populations during development. Can mediate cell survival as well as cell death of neural cells. Plays a role in the inactivation of RHOA. Plays a role in the regulation of the translocation of GLUT4 to the cell surface in adipocytes and skeletal muscle cells in response to insulin, probably by regulating RAB31 activity, and thereby contributes to the regulation of insulin-dependent glucose uptake. Necessary for the circadian oscillation of the clock genes BMAL1, PER1, PER2 and NR1D1 in the suprachiasmatic nucleus (SCmgetaN) of the brain and in liver and of the genes involved in glucose and lipid metabolism in the liver. Together with BFAR negatively regulates NF-kappa-B and JNK-related signaling pathways. The chain is Tumor necrosis factor receptor superfamily member 16 (NGFR) from Homo sapiens (Human).